The primary structure comprises 190 residues: Adenylate kinase (190 aa).

Glycine 11 to threonine 16 contacts ATP. The interval serine 31–valine 60 is NMP. Residues threonine 32, arginine 37, glutamine 58–valine 60, glycine 86–arginine 89, and glutamine 93 contribute to the AMP site. Residues glutamate 127–aspartate 137 form an LID region. Residue arginine 128 coordinates ATP. AMP contacts are provided by arginine 134 and arginine 145. Glycine 173 lines the ATP pocket.

This sequence belongs to the adenylate kinase family. In terms of assembly, monomer.

Its subcellular location is the cytoplasm. It catalyses the reaction AMP + ATP = 2 ADP. The protein operates within purine metabolism; AMP biosynthesis via salvage pathway; AMP from ADP: step 1/1. Catalyzes the reversible transfer of the terminal phosphate group between ATP and AMP. Plays an important role in cellular energy homeostasis and in adenine nucleotide metabolism. This is Adenylate kinase from Parabacteroides distasonis (strain ATCC 8503 / DSM 20701 / CIP 104284 / JCM 5825 / NCTC 11152).